Consider the following 136-residue polypeptide: Frataxin, mitochondrial (136 aa).

It belongs to the frataxin family. In terms of assembly, monomer. Oligomer.

It localises to the mitochondrion. The catalysed reaction is 4 Fe(2+) + O2 + 4 H(+) = 4 Fe(3+) + 2 H2O. Promotes the biosynthesis of heme as well as the assembly and repair of iron-sulfur clusters by delivering Fe(2+) to proteins involved in these pathways. May play a role in the protection against iron-catalyzed oxidative stress through its ability to catalyze the oxidation of Fe(2+) to Fe(3+). May be able to store large amounts of the metal in the form of a ferrihydrite mineral by oligomerization. The protein is Frataxin, mitochondrial (frh-1) of Caenorhabditis elegans.